Here is a 539-residue protein sequence, read N- to C-terminus: Phosphoenolpyruvate carboxykinase (ATP) (539 aa).

3 residues coordinate substrate: Arg-64, Tyr-206, and Lys-212. ATP-binding positions include Lys-212, His-231, and Gly-247–Thr-255. Mn(2+)-binding residues include Lys-212 and His-231. Asp-268 contributes to the Mn(2+) binding site. ATP contacts are provided by residues Glu-296, Arg-332, Arg-448–Ile-449, and Thr-454. Arg-332 contacts substrate.

This sequence belongs to the phosphoenolpyruvate carboxykinase (ATP) family. Monomer. Requires Mn(2+) as cofactor.

It localises to the cytoplasm. It catalyses the reaction oxaloacetate + ATP = phosphoenolpyruvate + ADP + CO2. It functions in the pathway carbohydrate biosynthesis; gluconeogenesis. Involved in the gluconeogenesis. Catalyzes the conversion of oxaloacetate (OAA) to phosphoenolpyruvate (PEP) through direct phosphoryl transfer between the nucleoside triphosphate and OAA. This is Phosphoenolpyruvate carboxykinase (ATP) from Salmonella agona (strain SL483).